Consider the following 200-residue polypeptide: Alpha/beta-tubulin-N-acetyltransferase 9 (200 aa).

An N-acetyltransferase domain is found at 34–181; the sequence is ETLRELTASE…HEVTLERPIT (148 aa).

This sequence belongs to the acetyltransferase family. GNAT subfamily. Interacts with microtubules as well as alpha/beta-tubulin heterodimers.

Its subcellular location is the nucleus. It localises to the cytoplasm. The protein resides in the cytoskeleton. It is found in the spindle. The protein localises to the spindle pole. The enzyme catalyses N-terminal L-methionyl-[tubulin] + acetyl-CoA = N-terminal N(alpha)-acetyl-L-methionyl-[tubulin] + CoA + H(+). In terms of biological role, N-acetyltransferase that mediates the acetylation of the N-terminal residues of alpha- and beta-tubulin. Required for microtubule stability and inhibition of JNK signaling to promote cell survival during development, possibly acting independently of its N-acetyltransferase activity. Necessary for the stabilization of spindle microtubules and for mitosis progression. Regulates microtubule stability by inhibiting Spastin-mediated depolymerization and promoting Eb1-mediated polymerization. This chain is Alpha/beta-tubulin-N-acetyltransferase 9, found in Drosophila melanogaster (Fruit fly).